A 975-amino-acid chain; its full sequence is Protein spalten (975 aa).

Disordered regions lie at residues 1–31 (MKKMLFMNKKEKKEEQSPAHSSLAQQHQLAQ) and 64–99 (NLAQLSTSTSSNSSVNNTTNTNTNTTNSSSISSNNN). Residues 8 to 17 (NKKEKKEEQS) show a composition bias toward basic and acidic residues. Positions 21–70 (SSLAQQHQLAQQQYQLQQQQLQLQYQQHQQQLQLAQQQKQNEQNLAQLST) form a coiled coil. The G-alpha domain occupies 114–458 (FCGTIMILGH…DAEKRGFTTP (345 aa)). The G1 motif stretch occupies residues 117–130 (TIMILGHTESGKTT). GTP contacts are provided by residues 122 to 129 (GHTESGKT), 261 to 267 (ISAYDQK), 286 to 290 (GCSGK), and 373 to 376 (NTSD). The segment at 259–267 (DIISAYDQK) is G2 motif. The tract at residues 282–291 (VDLFGCSGKQ) is G3 motif. A G4 motif region spans residues 369–376 (YLIFNTSD). The G5 motif stretch occupies residues 427–432 (VNLLDK). Disordered regions lie at residues 455-520 (FTTP…GSST) and 541-700 (DNDS…VGSK). Composition is skewed to low complexity over residues 460–478 (NQSNSSPVSSIGSNSSRNS), 500–515 (LKNVNNNNNNNNNTTT), and 544–587 (SSYS…NNAT). The span at 595–688 (PPKEPKPVKP…DGAAESKKNG (94 aa)) shows a compositional bias: basic and acidic residues. One can recognise a PPM-type phosphatase domain in the interval 704–972 (ESGFGSLQGR…DNITVLVVIL (269 aa)). The Mn(2+) site is built by Asp-749, Gly-750, Asp-920, and Asp-963.

It in the N-terminal section; belongs to the G-alpha family. In the C-terminal section; belongs to the PP2C family. In terms of assembly, g proteins are composed of 3 units; alpha, beta and gamma. The alpha chain contains the guanine nucleotide binding site. The cofactor is Mg(2+). Requires Mn(2+) as cofactor.

The protein resides in the cytoplasm. It is found in the cytosol. The protein localises to the cell membrane. The enzyme catalyses O-phospho-L-seryl-[protein] + H2O = L-seryl-[protein] + phosphate. It carries out the reaction O-phospho-L-threonyl-[protein] + H2O = L-threonyl-[protein] + phosphate. Inhibited by 50 mM NaF (sodium fluoride). In terms of biological role, involved in cell-type differentiation and morphogenesis. Dephosphorylates casein; in vitro. May also be involved as modulators or transducers in various transmembrane signaling systems. This Dictyostelium discoideum (Social amoeba) protein is Protein spalten (spnA).